A 427-amino-acid polypeptide reads, in one-letter code: Tol-Pal system protein TolB (427 aa).

The N-terminal stretch at 1–25 (MKTFAQLRLLLAAAALALLSFSAQA) is a signal peptide.

The protein belongs to the TolB family. The Tol-Pal system is composed of five core proteins: the inner membrane proteins TolA, TolQ and TolR, the periplasmic protein TolB and the outer membrane protein Pal. They form a network linking the inner and outer membranes and the peptidoglycan layer.

It localises to the periplasm. Functionally, part of the Tol-Pal system, which plays a role in outer membrane invagination during cell division and is important for maintaining outer membrane integrity. In Azoarcus sp. (strain BH72), this protein is Tol-Pal system protein TolB.